We begin with the raw amino-acid sequence, 256 residues long: Tryptophan synthase alpha chain (256 aa).

Active-site proton acceptor residues include Glu45 and Asp56.

The protein belongs to the TrpA family. Tetramer of two alpha and two beta chains.

It catalyses the reaction (1S,2R)-1-C-(indol-3-yl)glycerol 3-phosphate + L-serine = D-glyceraldehyde 3-phosphate + L-tryptophan + H2O. It functions in the pathway amino-acid biosynthesis; L-tryptophan biosynthesis; L-tryptophan from chorismate: step 5/5. Functionally, the alpha subunit is responsible for the aldol cleavage of indoleglycerol phosphate to indole and glyceraldehyde 3-phosphate. The chain is Tryptophan synthase alpha chain from Christiangramia forsetii (strain DSM 17595 / CGMCC 1.15422 / KT0803) (Gramella forsetii).